The sequence spans 309 residues: Glutaminase (309 aa).

7 residues coordinate substrate: Ser-64, Asn-114, Glu-160, Asn-167, Tyr-191, Tyr-243, and Val-261.

This sequence belongs to the glutaminase family. As to quaternary structure, homotetramer.

The catalysed reaction is L-glutamine + H2O = L-glutamate + NH4(+). In Agrobacterium fabrum (strain C58 / ATCC 33970) (Agrobacterium tumefaciens (strain C58)), this protein is Glutaminase.